We begin with the raw amino-acid sequence, 349 residues long: Isopentenyl-diphosphate delta-isomerase (349 aa).

Substrate is bound at residue Arg-6 to Lys-7. FMN-binding positions include Ala-62 to Thr-64, Ser-93, and Asn-122. Residue Gln-152 coordinates substrate. Residue Glu-153 coordinates Mg(2+). FMN-binding positions include Lys-184, Thr-214, Gly-258–Gly-259, and Ala-280–Gly-281.

This sequence belongs to the IPP isomerase type 2 family. Homooctamer. Dimer of tetramers. FMN is required as a cofactor. The cofactor is NADPH. It depends on Mg(2+) as a cofactor.

Its subcellular location is the cytoplasm. The catalysed reaction is isopentenyl diphosphate = dimethylallyl diphosphate. Its function is as follows. Involved in the biosynthesis of isoprenoids. Catalyzes the 1,3-allylic rearrangement of the homoallylic substrate isopentenyl (IPP) to its allylic isomer, dimethylallyl diphosphate (DMAPP). The protein is Isopentenyl-diphosphate delta-isomerase of Bacillus subtilis (strain 168).